We begin with the raw amino-acid sequence, 632 residues long: Bestrophin homolog 24 (632 aa).

A run of 4 helical transmembrane segments spans residues 28-48, 83-103, 234-254, and 271-291; these read IWKA…ILSV, GFFV…IGFI, IMYP…CLLA, and LYFP…MKVA. Disordered regions lie at residues 491–516 and 562–632; these read LSNK…EHPF and ETEV…TKFE. A compositionally biased stretch (basic and acidic residues) spans 563–602; the sequence is TEVKRDEKKKKEEELREEGDNGKEEKDNKEDKKEEQDRPS. Basic residues predominate over residues 623 to 632; that stretch reads PHLRPPTKFE.

Belongs to the anion channel-forming bestrophin (TC 1.A.46) family. Calcium-sensitive chloride channel subfamily. As to quaternary structure, forms oligomers.

Its subcellular location is the cell membrane. Forms chloride channels. The protein is Bestrophin homolog 24 (best-24) of Caenorhabditis elegans.